The following is a 499-amino-acid chain: MIKRALISVFNKNGILKLAKFLNEKGVEILSTGGTYKHLKENGIPVIEVSEVTGFDEILDGRVKTLHPKIHGGILAIRDNKEHMDTIKNKGITPIDMVVVNLYPFFDKVKENISFEEKVEFIDIGGPTMIRAAAKNFQDVVVLTDVNDYDDVIDQIEKTGEVAYNTKKRLAGKVFNLMSAYDGAISRFLLEDEYPEYLAVPYKKKMDLRYGENPHQTAAFYEAAFGDGAMKGFEQLNGKELSYNNIKDMDIAWKVVNEFDETVCCALKHNSPCGVAIGENPLDAYKKAFECDDTSIFGGIVALNKVIDKPAAEEMVKIFLEIVIAPDFTADALEVLKSKKNLRVIKANEKPSDNFELAKVDGAMLVQSADNKLTEKMEVVTDKKPTDEEMRDMIFGMKVVKYVKSNAIVVVKNGAAVGIGGGQVNRIWPAKDAMERGKGAAVLASDAFFPFGDIVEEAHKNGIKAIIQPGGSIRDQESIDGCNKYGISMVMTGIRHFKH.

An MGS-like domain is found at 1 to 144 (MIKRALISVF…KNFQDVVVLT (144 aa)).

Belongs to the PurH family.

The catalysed reaction is (6R)-10-formyltetrahydrofolate + 5-amino-1-(5-phospho-beta-D-ribosyl)imidazole-4-carboxamide = 5-formamido-1-(5-phospho-D-ribosyl)imidazole-4-carboxamide + (6S)-5,6,7,8-tetrahydrofolate. The enzyme catalyses IMP + H2O = 5-formamido-1-(5-phospho-D-ribosyl)imidazole-4-carboxamide. It participates in purine metabolism; IMP biosynthesis via de novo pathway; 5-formamido-1-(5-phospho-D-ribosyl)imidazole-4-carboxamide from 5-amino-1-(5-phospho-D-ribosyl)imidazole-4-carboxamide (10-formyl THF route): step 1/1. Its pathway is purine metabolism; IMP biosynthesis via de novo pathway; IMP from 5-formamido-1-(5-phospho-D-ribosyl)imidazole-4-carboxamide: step 1/1. This is Bifunctional purine biosynthesis protein PurH from Clostridium acetobutylicum (strain ATCC 824 / DSM 792 / JCM 1419 / IAM 19013 / LMG 5710 / NBRC 13948 / NRRL B-527 / VKM B-1787 / 2291 / W).